Here is an 804-residue protein sequence, read N- to C-terminus: Leucine--tRNA ligase (804 aa).

A 'HIGH' region motif is present at residues 40-51 (PYPSGAGLHVGH). The 'KMSKS' region signature appears at 576–580 (KMSKS). Residue K579 coordinates ATP.

It belongs to the class-I aminoacyl-tRNA synthetase family.

Its subcellular location is the cytoplasm. It catalyses the reaction tRNA(Leu) + L-leucine + ATP = L-leucyl-tRNA(Leu) + AMP + diphosphate. The polypeptide is Leucine--tRNA ligase (Staphylococcus saprophyticus subsp. saprophyticus (strain ATCC 15305 / DSM 20229 / NCIMB 8711 / NCTC 7292 / S-41)).